The following is a 255-amino-acid chain: tRNA (guanine-N(1)-)-methyltransferase (255 aa).

S-adenosyl-L-methionine-binding positions include Gly113 and 133-138 (IGDYVL).

This sequence belongs to the RNA methyltransferase TrmD family. Homodimer.

The protein localises to the cytoplasm. It catalyses the reaction guanosine(37) in tRNA + S-adenosyl-L-methionine = N(1)-methylguanosine(37) in tRNA + S-adenosyl-L-homocysteine + H(+). In terms of biological role, specifically methylates guanosine-37 in various tRNAs. This Salmonella choleraesuis (strain SC-B67) protein is tRNA (guanine-N(1)-)-methyltransferase.